The chain runs to 72 residues: uncharacterized protein (72 aa).

Residues tyrosine 27–valine 55 are a coiled coil.

This is an uncharacterized protein from Schizosaccharomyces pombe (strain 972 / ATCC 24843) (Fission yeast).